We begin with the raw amino-acid sequence, 483 residues long: Rhamnulokinase (483 aa).

Ala11–Arg15 serves as a coordination point for ATP. Residues Gly79 and His234–Thr236 each bind substrate. Asp235 acts as the Proton acceptor in catalysis. Residue Thr257 participates in ATP binding. Substrate is bound at residue Asn294. Gln302 serves as a coordination point for ATP. An intrachain disulfide couples Cys352 to Cys369. ATP is bound at residue Gly401.

It belongs to the rhamnulokinase family. Mg(2+) serves as cofactor.

The catalysed reaction is L-rhamnulose + ATP = L-rhamnulose 1-phosphate + ADP + H(+). Its pathway is carbohydrate degradation; L-rhamnose degradation; glycerone phosphate from L-rhamnose: step 2/3. Its function is as follows. Involved in the catabolism of L-rhamnose (6-deoxy-L-mannose). Catalyzes the transfer of the gamma-phosphate group from ATP to the 1-hydroxyl group of L-rhamnulose to yield L-rhamnulose 1-phosphate. This Listeria monocytogenes serotype 4b (strain F2365) protein is Rhamnulokinase.